The chain runs to 390 residues: Galactokinase (390 aa).

35 to 38 provides a ligand contact to substrate; sequence EHTD. 125–131 contributes to the ATP binding site; sequence GAGLSSS. Mg(2+)-binding residues include S131 and E163. The Proton acceptor role is filled by D175. Substrate is bound at residue Y224.

Belongs to the GHMP kinase family. GalK subfamily.

It localises to the cytoplasm. It catalyses the reaction alpha-D-galactose + ATP = alpha-D-galactose 1-phosphate + ADP + H(+). The protein operates within carbohydrate metabolism; galactose metabolism. Functionally, catalyzes the transfer of the gamma-phosphate of ATP to D-galactose to form alpha-D-galactose-1-phosphate (Gal-1-P). The sequence is that of Galactokinase from Proteus mirabilis (strain HI4320).